Consider the following 71-residue polypeptide: General transcription factor IIH subunit 5 (71 aa).

Residue T69 is modified to Phosphothreonine.

It belongs to the TFB5 family. Component of the 7-subunit TFIIH core complex composed of XPB/ERCC3, XPD/ERCC2, GTF2H1, GTF2H2, GTF2H3, GTF2H4 and GTF2H5, which is active in NER. The core complex associates with the 3-subunit CDK-activating kinase (CAK) module composed of CCNH/cyclin H, CDK7 and MNAT1 to form the 10-subunit holoenzyme (holo-TFIIH) active in transcription. Part of TBP-based Pol II pre-initiation complex (PIC), in which Pol II core assembles with general transcription factors and other specific initiation factors including GTF2E1, GTF2E2, GTF2F1, GTF2F2, TCEA1, ERCC2, ERCC3, GTF2H2, GTF2H3, GTF2H4, GTF2H5, GTF2A1, GTF2A2, GTF2B and TBP; this large multi-subunit PIC complex mediates DNA unwinding and targets Pol II core to the transcription start site where the first phosphodiester bond forms.

The protein resides in the nucleus. It localises to the cytoplasm. Component of the general transcription and DNA repair factor IIH (TFIIH) core complex, which is involved in general and transcription-coupled nucleotide excision repair (NER) of damaged DNA and, when complexed to CAK, in RNA transcription by RNA polymerase II. In NER, TFIIH acts by opening DNA around the lesion to allow the excision of the damaged oligonucleotide and its replacement by a new DNA fragment. In transcription, TFIIH has an essential role in transcription initiation. When the pre-initiation complex (PIC) has been established, TFIIH is required for promoter opening and promoter escape. Phosphorylation of the C-terminal tail (CTD) of the largest subunit of RNA polymerase II by the kinase module CAK controls the initiation of transcription. Necessary for the stability of the TFIIH complex and for the presence of normal levels of TFIIH in the cell. The polypeptide is General transcription factor IIH subunit 5 (Homo sapiens (Human)).